The following is a 260-amino-acid chain: Transforming acid coiled-coil-containing protein 1 (260 aa).

Positions 1-43 (MSLNTTFTKEDGTEVVIPFNGSQNGHPENEEPEVEEAAEPSSS) are disordered. Residues 108 to 249 (ASSEELEKAL…CDQLLNDVDV (142 aa)) are a coiled coil.

Belongs to the TACC family. In terms of assembly, interacts with zyg-9 to form a heterodimer. Interacts with zyg-8 to form a heterodimer. Interacts with efa-6 (via N-terminus). In terms of tissue distribution, expressed in touch neurons.

It localises to the cytoplasm. The protein resides in the cytoskeleton. Its subcellular location is the spindle pole. It is found in the microtubule organizing center. The protein localises to the centrosome. It localises to the chromosome. The protein resides in the centromere. Its subcellular location is the kinetochore. It is found in the cell projection. The protein localises to the axon. It localises to the perikaryon. Its function is as follows. Involved in microtubule formation, polymerization and assembly, regulating microtubule nucleation and length. Plays a role in pronuclear migration and mitotic and meiotic spindle elongation during early embryogenesis. In complex with zyg-9, functions during the early stages of embryonic development to regulate microtubule assembly throughout the cell cycle. Specifically, the complex is required for the formation and growth of astral microtubules and spindle microtubules during mitotic spindle assembly. At anaphase, the complex is required for mitotic spindle positioning in one-cell stage embryos. The complex acts in a partially redundant manner with the tac-1/zyg-8 complex to regulate microtubule assembly and processes during interphase, mitosis and meiosis in embryos. Plays a role in injury-induced axonal regrowth, regeneration and microtubule stability in PLM neurons and this may be downstream of efa-6. This chain is Transforming acid coiled-coil-containing protein 1, found in Caenorhabditis elegans.